The primary structure comprises 172 residues: Nicotinamide-nucleotide adenylyltransferase (172 aa).

Belongs to the archaeal NMN adenylyltransferase family.

The protein resides in the cytoplasm. It carries out the reaction beta-nicotinamide D-ribonucleotide + ATP + H(+) = diphosphate + NAD(+). Its pathway is cofactor biosynthesis; NAD(+) biosynthesis; NAD(+) from nicotinamide D-ribonucleotide: step 1/1. In Sulfurisphaera tokodaii (strain DSM 16993 / JCM 10545 / NBRC 100140 / 7) (Sulfolobus tokodaii), this protein is Nicotinamide-nucleotide adenylyltransferase.